The chain runs to 196 residues: Phosphoheptose isomerase (196 aa).

Residues 35–194 (LTACLRCGGK…EKELFTPSGQ (160 aa)) form the SIS domain. Substrate is bound at residue 50–52 (NGG). Positions 59 and 63 each coordinate Zn(2+). Substrate contacts are provided by residues Glu63, 92-93 (ND), 118-120 (STS), Ser123, and Gln170. 2 residues coordinate Zn(2+): Gln170 and His178.

It belongs to the SIS family. GmhA subfamily. As to quaternary structure, homotetramer. Zn(2+) serves as cofactor.

The protein localises to the cytoplasm. It carries out the reaction 2 D-sedoheptulose 7-phosphate = D-glycero-alpha-D-manno-heptose 7-phosphate + D-glycero-beta-D-manno-heptose 7-phosphate. The protein operates within carbohydrate biosynthesis; D-glycero-D-manno-heptose 7-phosphate biosynthesis; D-glycero-alpha-D-manno-heptose 7-phosphate and D-glycero-beta-D-manno-heptose 7-phosphate from sedoheptulose 7-phosphate: step 1/1. Catalyzes the isomerization of sedoheptulose 7-phosphate in D-glycero-D-manno-heptose 7-phosphate. The protein is Phosphoheptose isomerase of Syntrophotalea carbinolica (strain DSM 2380 / NBRC 103641 / GraBd1) (Pelobacter carbinolicus).